The primary structure comprises 350 residues: Streptomycin biosynthesis operon possible regulatory protein (350 aa).

Positions 1 to 10 (MEHISGNSPE) are enriched in polar residues. Disordered stretches follow at residues 1–20 (MEHI…AAVT), 168–189 (AGVP…LDPT), and 211–258 (AAQA…SRAD). Basic and acidic residues-rich tracts occupy residues 177 to 189 (IGRD…LDPT) and 223 to 242 (DVRK…DRQQ).

The sequence is that of Streptomycin biosynthesis operon possible regulatory protein (strR) from Streptomyces griseus.